Consider the following 368-residue polypeptide: Glutamate 5-kinase (368 aa).

Lys13 contacts ATP. Ser54, Asp141, and Asn153 together coordinate substrate. 173-174 (SD) serves as a coordination point for ATP. The PUA domain maps to 278 to 355 (KGSLRLDAGA…DEIPEILGYP (78 aa)).

The protein belongs to the glutamate 5-kinase family.

It is found in the cytoplasm. It catalyses the reaction L-glutamate + ATP = L-glutamyl 5-phosphate + ADP. It participates in amino-acid biosynthesis; L-proline biosynthesis; L-glutamate 5-semialdehyde from L-glutamate: step 1/2. Functionally, catalyzes the transfer of a phosphate group to glutamate to form L-glutamate 5-phosphate. The polypeptide is Glutamate 5-kinase (Jannaschia sp. (strain CCS1)).